The chain runs to 525 residues: GMP synthase [glutamine-hydrolyzing] (525 aa).

The region spanning 3 to 200 is the Glutamine amidotransferase type-1 domain; the sequence is KILILDFGSQ…VLHVAGCKPS (198 aa). Cysteine 79 acts as the Nucleophile in catalysis. Residues histidine 174 and glutamate 176 contribute to the active site. The region spanning 201-393 is the GMPS ATP-PPase domain; it reads WTMPNYIDEA…LGLPHDMVYR (193 aa). 228–234 contributes to the ATP binding site; sequence SGGVDSS.

As to quaternary structure, homodimer.

It carries out the reaction XMP + L-glutamine + ATP + H2O = GMP + L-glutamate + AMP + diphosphate + 2 H(+). It participates in purine metabolism; GMP biosynthesis; GMP from XMP (L-Gln route): step 1/1. Catalyzes the synthesis of GMP from XMP. The polypeptide is GMP synthase [glutamine-hydrolyzing] (Chromobacterium violaceum (strain ATCC 12472 / DSM 30191 / JCM 1249 / CCUG 213 / NBRC 12614 / NCIMB 9131 / NCTC 9757 / MK)).